The chain runs to 55 residues: Large ribosomal subunit protein bL33 (55 aa).

This sequence belongs to the bacterial ribosomal protein bL33 family.

The polypeptide is Large ribosomal subunit protein bL33 (Novosphingobium aromaticivorans (strain ATCC 700278 / DSM 12444 / CCUG 56034 / CIP 105152 / NBRC 16084 / F199)).